Consider the following 919-residue polypeptide: Chaperone protein ClpC2, chloroplastic (919 aa).

The transit peptide at 1–54 directs the protein to the chloroplast; sequence MAGTLLQPVALGTTFAGRVSGQRWKSHGTRRPPSMLAMSLSRPVKMAAFVGLRS. Residues 89–231 enclose the Clp R domain; sequence FERFTEKAIK…RTQVIRMIGE (143 aa). 2 repeat regions span residues 92 to 157 and 167 to 231; these read FTEK…IGRG and FTPR…MIGE. Residues 252–499 form an i region; it reads LEEYGTNLTK…RVRLRHAQVP (248 aa). 297–304 serves as a coordination point for ATP; the sequence is GEPGVGKT. One can recognise a UVR domain in the interval 506–541; that stretch reads DKELKQITKDKNEAVRSQDFEKAGELRDREMELKAQ. Positions 566–757 are II; that stretch reads VNEADIQHIV…LLIMTSNVGS (192 aa). 640 to 647 is an ATP binding site; the sequence is GPTGVGKS.

Belongs to the ClpA/ClpB family. ClpC subfamily.

The protein resides in the plastid. Its subcellular location is the chloroplast. In terms of biological role, molecular chaperone that may interact with a ClpP-like protease involved in degradation of denatured proteins in the chloroplast. The protein is Chaperone protein ClpC2, chloroplastic (CLPC2) of Oryza sativa subsp. japonica (Rice).